A 249-amino-acid polypeptide reads, in one-letter code: MILELDCGNSFIKWRVIQAVDATIVGGGIVDSDQALVAEVGTLASLRLSGCRIVSVRSEEETAALCTLIGQAFSVVPRVAEPAREMAGVRNGYEDFQRLGMDRWLAALGAFHLAKGACLVIDLGTAAKADFIGADGEHLGGYICPGMPLMRSQLRTHTRRIRYDDASAERALTSLAPGRSTVEAVERGCVLMLQGFARTQLEQARSLWGEAFTVFLTGGDAPLVREAAPQARVVPDLVFVGLAMACPLN.

Residue 6–13 (DCGNSFIK) coordinates ATP. Substrate is bound by residues Y93 and 100–103 (GMDR). The active-site Proton acceptor is the D102. A K(+)-binding site is contributed by D122. Residue T125 coordinates ATP. Residue T181 participates in substrate binding.

The protein belongs to the type III pantothenate kinase family. As to quaternary structure, homodimer. The cofactor is NH4(+). K(+) is required as a cofactor.

It is found in the cytoplasm. It catalyses the reaction (R)-pantothenate + ATP = (R)-4'-phosphopantothenate + ADP + H(+). It functions in the pathway cofactor biosynthesis; coenzyme A biosynthesis; CoA from (R)-pantothenate: step 1/5. Its function is as follows. Catalyzes the phosphorylation of pantothenate (Pan), the first step in CoA biosynthesis. The protein is Type III pantothenate kinase of Pseudomonas putida (strain W619).